A 311-amino-acid chain; its full sequence is Putative S-adenosyl-L-methionine-dependent methyltransferase MMAR_0358 (311 aa).

S-adenosyl-L-methionine is bound by residues D132 and 161-162 (DL).

This sequence belongs to the UPF0677 family.

Functionally, exhibits S-adenosyl-L-methionine-dependent methyltransferase activity. In Mycobacterium marinum (strain ATCC BAA-535 / M), this protein is Putative S-adenosyl-L-methionine-dependent methyltransferase MMAR_0358.